The following is a 412-amino-acid chain: Serine hydroxymethyltransferase (412 aa).

(6S)-5,6,7,8-tetrahydrofolate-binding positions include L120 and 124–126 (GHL). K228 is subject to N6-(pyridoxal phosphate)lysine. Position 353–355 (353–355 (SPF)) interacts with (6S)-5,6,7,8-tetrahydrofolate.

It belongs to the SHMT family. In terms of assembly, homodimer. Requires pyridoxal 5'-phosphate as cofactor.

Its subcellular location is the cytoplasm. The enzyme catalyses (6R)-5,10-methylene-5,6,7,8-tetrahydrofolate + glycine + H2O = (6S)-5,6,7,8-tetrahydrofolate + L-serine. Its pathway is one-carbon metabolism; tetrahydrofolate interconversion. The protein operates within amino-acid biosynthesis; glycine biosynthesis; glycine from L-serine: step 1/1. Catalyzes the reversible interconversion of serine and glycine with tetrahydrofolate (THF) serving as the one-carbon carrier. This reaction serves as the major source of one-carbon groups required for the biosynthesis of purines, thymidylate, methionine, and other important biomolecules. Also exhibits THF-independent aldolase activity toward beta-hydroxyamino acids, producing glycine and aldehydes, via a retro-aldol mechanism. The chain is Serine hydroxymethyltransferase from Lachnoclostridium phytofermentans (strain ATCC 700394 / DSM 18823 / ISDg) (Clostridium phytofermentans).